Consider the following 1411-residue polypeptide: Early endosome antigen 1 (1411 aa).

The segment at 1–27 is disordered; the sequence is MLRRILQRTPGRVGSQGSDLDSSATPI. Over residues 15–27 the composition is skewed to polar residues; sequence SQGSDLDSSATPI. Residues 41 to 64 form a C2H2-type zinc finger; sequence FICPQCMKSLGSADELFKHYEAVH. Phosphoserine is present on residues S52 and S70. Residues 74–1348 adopt a coiled-coil conformation; that stretch reads GESNLALKRD…IKHTQALNRK (1275 aa). The interval 473–501 is disordered; sequence VTNSTELQHQLDKTKQQHQEQQALQQSTT. Residues 481–490 show a composition bias toward basic and acidic residues; that stretch reads HQLDKTKQQH. The FYVE-type zinc-finger motif lies at 1352-1410; the sequence is DNEVQNCMACGKGFSVTVRRHHCRQCGNIFCAECSAKNALTPSSKKPVRVCDACFNDLQ. Zn(2+)-binding residues include C1358, C1361, C1374, C1377, C1382, C1385, C1402, and C1405.

As to quaternary structure, homodimer. Binds STX6. Binds RAB5A, RAB5B, RAB5C and RAB22A that have been activated by GTP-binding. Interacts with RAB31. Interacts with ERBB2. Interacts with SAMD9 and SAMD9L. May interact with PLEKHF2.

It is found in the cytoplasm. The protein localises to the early endosome membrane. Binds phospholipid vesicles containing phosphatidylinositol 3-phosphate and participates in endosomal trafficking. The protein is Early endosome antigen 1 (EEA1) of Homo sapiens (Human).